The chain runs to 643 residues: Phosphomethylpyrimidine synthase (643 aa).

Substrate is bound by residues N248, M277, Y306, H342, 362-364 (SRG), 403-406 (DGLR), and E442. H446 provides a ligand contact to Zn(2+). A substrate-binding site is contributed by Y469. Position 510 (H510) interacts with Zn(2+). [4Fe-4S] cluster is bound by residues C590, C593, and C598.

The protein belongs to the ThiC family. As to quaternary structure, homodimer. [4Fe-4S] cluster is required as a cofactor.

It carries out the reaction 5-amino-1-(5-phospho-beta-D-ribosyl)imidazole + S-adenosyl-L-methionine = 4-amino-2-methyl-5-(phosphooxymethyl)pyrimidine + CO + 5'-deoxyadenosine + formate + L-methionine + 3 H(+). It participates in cofactor biosynthesis; thiamine diphosphate biosynthesis. In terms of biological role, catalyzes the synthesis of the hydroxymethylpyrimidine phosphate (HMP-P) moiety of thiamine from aminoimidazole ribotide (AIR) in a radical S-adenosyl-L-methionine (SAM)-dependent reaction. The chain is Phosphomethylpyrimidine synthase from Paraburkholderia phymatum (strain DSM 17167 / CIP 108236 / LMG 21445 / STM815) (Burkholderia phymatum).